A 773-amino-acid chain; its full sequence is Mitochondrial inner membrane m-AAA protease component yta12 (773 aa).

Residues 83 to 119 (FSVTSKRSQNGSSGSNSDANGRKNGQKNDDSKKKGLN) form a disordered region. Residues 87 to 101 (SKRSQNGSSGSNSDA) are compositionally biased toward low complexity. 2 helical membrane passes run 126–146 (VFEIALNGNTILGGILVAYIL) and 239–259 (VLATLLSFAPTLLIIGSVIYL). Residues valine 298, alanine 299, threonine 340, glycine 341, lysine 342, threonine 343, leucine 344, and histidine 479 each contribute to the ATP site. Residue histidine 561 participates in Zn(2+) binding. Glutamate 562 is an active-site residue. Histidine 565 and aspartate 638 together coordinate Zn(2+). The segment at 752 to 773 (EYKNDHDPRNPPIPPSPQQPSA) is disordered. A compositionally biased stretch (pro residues) spans 761-773 (NPPIPPSPQQPSA).

It in the N-terminal section; belongs to the AAA ATPase family. This sequence in the C-terminal section; belongs to the peptidase M41 family. In terms of assembly, component of the m-AAA protease complex. The cofactor is Zn(2+).

The protein localises to the mitochondrion membrane. The catalysed reaction is ATP + H2O = ADP + phosphate + H(+). Catalytic component of the m-AAA protease, a protease that plays a key role in proteostasis of inner mitochondrial membrane proteins. Possesses both ATPase and protease activities: the ATPase activity is required to unfold substrates, threading them into the internal proteolytic cavity for hydrolysis into small peptide fragments. The complex is necessary for the assembly of mitochondrial respiratory chain and ATPase complexes. The m-AAA protease carries out protein quality control in the inner membrane of the mitochondria by mediating degradation of mistranslated or misfolded polypeptides. It also mediates protein maturation of the mitochondrial ribosomal subunit mrpl32/bL32m by catalyzing the cleavage of the presequence of mrpl32/bL32m prior to assembly into the mitochondrial ribosome. Also acts as a membrane protein dislocase: required to dislocate moderately hydrophobic transmembrane segments from the membrane. The chain is Mitochondrial inner membrane m-AAA protease component yta12 (yta12) from Schizosaccharomyces pombe (strain 972 / ATCC 24843) (Fission yeast).